A 334-amino-acid chain; its full sequence is Fructose-1,6-bisphosphatase class 1 (334 aa).

Residues Glu92, Asp114, Leu116, and Asp117 each coordinate Mg(2+). Residues 117 to 120 and Asn209 contribute to the substrate site; that span reads DGSS. Glu281 provides a ligand contact to Mg(2+).

Belongs to the FBPase class 1 family. As to quaternary structure, homotetramer. The cofactor is Mg(2+).

Its subcellular location is the cytoplasm. The enzyme catalyses beta-D-fructose 1,6-bisphosphate + H2O = beta-D-fructose 6-phosphate + phosphate. Its pathway is carbohydrate biosynthesis; gluconeogenesis. The polypeptide is Fructose-1,6-bisphosphatase class 1 (Nitrosomonas eutropha (strain DSM 101675 / C91 / Nm57)).